Reading from the N-terminus, the 167-residue chain is Putative lipoprotein YteS (167 aa).

Residues 1–20 (MTKRIRTALCVIVSVLFLAS) form the signal peptide. Cys21 carries N-palmitoyl cysteine lipidation. Cys21 carries the S-diacylglycerol cysteine lipid modification.

It localises to the cell membrane. May play a role in the degradation of type I rhamnogalacturonan derived from plant cell walls. In Bacillus subtilis (strain 168), this protein is Putative lipoprotein YteS (yteS).